Consider the following 160-residue polypeptide: Cathelin-related peptide SC5 (160 aa).

Positions 1–29 (METQRASLSLGRCSLWLLLLGLALPSASA) are cleaved as a signal peptide. Residues 30 to 131 (QVLSYREAVL…DITCAEPQSV (102 aa)) constitute a propeptide that is removed on maturation. Disulfide bonds link Cys-86–Cys-97 and Cys-108–Cys-125.

Belongs to the cathelicidin family.

The protein localises to the secreted. Its function is as follows. Broad spectrum bactericidal agent. The sequence is that of Cathelin-related peptide SC5 from Ovis aries (Sheep).